The chain runs to 586 residues: Ezrin (586 aa).

The 294-residue stretch at 2–295 (PKPINVRVTT…GNHELYMRRR (294 aa)) folds into the FERM domain. Position 60 is an N6-acetyllysine (Lys60). Positions 115 to 120 (IYCPPE) match the [IL]-x-C-x-x-[DE] motif motif. Phosphotyrosine; by PDGFR is present on Tyr146. Positions 244-586 (EIRNISFNDK…KQRIDEFEAM (343 aa)) are interaction with SCYL3. Residues 302 to 462 (VQQMKAQARE…QDDLVKTKEE (161 aa)) adopt a coiled-coil conformation. The interval 305 to 340 (MKAQAREEKHQKQLERQQLESEKKRREAVEQEKEQM) is disordered. The span at 308 to 340 (QAREEKHQKQLERQQLESEKKRREAVEQEKEQM) shows a compositional bias: basic and acidic residues. Tyr354 bears the Phosphotyrosine; by PDGFR mark. Ser366 is subject to Phosphoserine. Tyr478 is modified (phosphotyrosine). Position 535 is a phosphoserine (Ser535). The residue at position 567 (Thr567) is a Phosphothreonine; by ROCK2 and PKC/PRKCI.

As to quaternary structure, interacts with PALS1. Found in a complex with EZR, PODXL and NHERF2. Interacts with MCC, PLEKHG6, PODXL, SCYL3/PACE1, NHERF1, NHERF2 and TMEM8B. Interacts (when phosphorylated) with FES/FPS. Interacts with dimeric S100P, the interaction may be activating through unmasking of F-actin binding sites. Identified in complexes that contain VIM, EZR, AHNAK, BFSP1, BFSP2, ANK2, PLEC, PRX and spectrin. Detected in a complex composed of at least EZR, AHNAK, PPL and PRX. Interacts with PDPN (via cytoplasmic domain); activates RHOA and promotes epithelial-mesenchymal transition. Interacts with SPN/CD43 cytoplasmic tail, CD44 and ICAM2. Interacts with SLC9A3; interaction targets SLC9A3 to the apical membrane. Interacts with SLC9A1; regulates interactions of SLC9A1 with cytoskeletal and promotes stress fiber formation. Interacts with CLIC5; may work together in a complex which also includes RDX and MYO6 to stabilize linkages between the plasma membrane and subjacent actin cytoskeleton at the base of stereocilia. In terms of processing, phosphorylated by tyrosine-protein kinases. Phosphorylation by ROCK2 suppresses the head-to-tail association of the N-terminal and C-terminal halves resulting in an opened conformation which is capable of actin and membrane-binding. Post-translationally, S-nitrosylation is induced by interferon-gamma and oxidatively-modified low-densitity lipoprotein (LDL(ox)) possibly implicating the iNOS-S100A8/9 transnitrosylase complex.

It localises to the apical cell membrane. It is found in the cell projection. The protein resides in the microvillus membrane. The protein localises to the ruffle membrane. Its subcellular location is the cytoplasm. It localises to the cell cortex. It is found in the cytoskeleton. The protein resides in the microvillus. A head-to-tail association, of the N-terminal and C-terminal halves results in a closed conformation (inactive form) which is incapable of actin or membrane-binding. Probably involved in connections of major cytoskeletal structures to the plasma membrane. In epithelial cells, required for the formation of microvilli and membrane ruffles on the apical pole. Along with PLEKHG6, required for normal macropinocytosis. In Oryctolagus cuniculus (Rabbit), this protein is Ezrin (EZR).